The following is a 246-amino-acid chain: MSRGTGAGYDRHITIFSPEGRLYQVEYAFKAVKSAGVTSIGVRGKDSVCVVTQKKVPDKLLDHTSVTHLFPITKYIGLLATGLTADARSLVYQARNEAAEFRFKWGYEMPVDVLAKWIADKAQVYTQHAYMRPLGVVAMVLGYDEEKNAQLFKCDPAGHFFGHKATSAGLKEQEAINFLEKKMKDDPQFSYEETVQIAISALQSVLQEDFKATEIEVGVVRKDDRVFRALTTEEIDQHLTAISERD.

This sequence belongs to the peptidase T1A family. In terms of assembly, the 26S proteasome consists of a 20S proteasome core and two 19S regulatory subunits. The 20S proteasome core is composed of 28 subunits that are arranged in four stacked rings, resulting in a barrel-shaped structure. The two end rings are each formed by seven alpha subunits, and the two central rings are each formed by seven beta subunits. The catalytic chamber with the active sites is on the inside of the barrel.

The protein localises to the cytoplasm. Its subcellular location is the nucleus. The proteasome is a multicatalytic proteinase complex which is characterized by its ability to cleave peptides with Arg, Phe, Tyr, Leu, and Glu adjacent to the leaving group at neutral or slightly basic pH. The proteasome has an ATP-dependent proteolytic activity. This chain is Proteasome subunit alpha type-6 (PAA1), found in Oryza sativa subsp. japonica (Rice).